Consider the following 346-residue polypeptide: Heat-inducible transcription repressor HrcA (346 aa).

It belongs to the HrcA family.

Its function is as follows. Negative regulator of class I heat shock genes (grpE-dnaK-dnaJ and groELS operons). Prevents heat-shock induction of these operons. The polypeptide is Heat-inducible transcription repressor HrcA (Erythrobacter litoralis (strain HTCC2594)).